A 318-amino-acid chain; its full sequence is Ribosomal RNA small subunit methyltransferase H (318 aa).

S-adenosyl-L-methionine is bound by residues 35-37 (AGH), D55, F84, D105, and Q112. The segment at 294-318 (SDSELSENNRSRSAKLRIAEKIKSR) is disordered.

Belongs to the methyltransferase superfamily. RsmH family.

It localises to the cytoplasm. The enzyme catalyses cytidine(1402) in 16S rRNA + S-adenosyl-L-methionine = N(4)-methylcytidine(1402) in 16S rRNA + S-adenosyl-L-homocysteine + H(+). Specifically methylates the N4 position of cytidine in position 1402 (C1402) of 16S rRNA. This Enterococcus faecalis (strain ATCC 700802 / V583) protein is Ribosomal RNA small subunit methyltransferase H.